A 294-amino-acid polypeptide reads, in one-letter code: Shikimate dehydrogenase (NADP(+)) (294 aa).

Shikimate contacts are provided by residues 14–16 and threonine 61; that span reads SKS. Lysine 65 acts as the Proton acceptor in catalysis. Aspartate 77 contacts NADP(+). Shikimate contacts are provided by asparagine 86 and aspartate 102. Residues 140 to 144 and leucine 235 contribute to the NADP(+) site; that span reads GSGGA. Residue tyrosine 237 coordinates shikimate. Glycine 259 is a binding site for NADP(+).

It belongs to the shikimate dehydrogenase family. In terms of assembly, homodimer.

It carries out the reaction shikimate + NADP(+) = 3-dehydroshikimate + NADPH + H(+). It participates in metabolic intermediate biosynthesis; chorismate biosynthesis; chorismate from D-erythrose 4-phosphate and phosphoenolpyruvate: step 4/7. Functionally, involved in the biosynthesis of the chorismate, which leads to the biosynthesis of aromatic amino acids. Catalyzes the reversible NADPH linked reduction of 3-dehydroshikimate (DHSA) to yield shikimate (SA). The sequence is that of Shikimate dehydrogenase (NADP(+)) from Blochmanniella floridana.